A 35-amino-acid polypeptide reads, in one-letter code: Alpha-amanitin proprotein (35 aa).

A propeptide spanning residues Met1–Pro10 is cleaved from the precursor. Ile11 bears the (3R,4R)-4,5-dihydroxyisoleucine; in form alpha-amanitin mark. Ile11 is modified ((3R,4S)-4-hydroxyisoleucine; in form gamma-amanitin). Residues Ile11–Pro18 constitute a cross-link (cyclopeptide (Ile-Pro)). Residues Trp12–Cys16 constitute a cross-link (2'-cysteinyl-6'-hydroxytryptophan sulfoxide (Trp-Cys)). Pro18 is subject to 4-hydroxyproline. Positions Cys19–Cys35 are excised as a propeptide.

The protein belongs to the MSDIN fungal toxin family. In terms of processing, processed by the macrocyclase-peptidase enzyme POPB to yield a toxic cyclic decapeptide. POPB first removes 10 residues from the N-terminus. Conformational trapping of the remaining peptide forces the enzyme to release this intermediate rather than proceed to macrocyclization. The enzyme rebinds the remaining peptide in a different conformation and catalyzes macrocyclization of the N-terminal 8 residues.

In terms of biological role, major toxin belonging to the bicyclic octapeptides amatoxins that acts by binding non-competitively to RNA polymerase II and greatly slowing the elongation of transcripts from target promoters. This Amanita bisporigera (Destroying angel) protein is Alpha-amanitin proprotein.